We begin with the raw amino-acid sequence, 186 residues long: Probable GPI-anchored cupredoxin ARB_05732-1 (186 aa).

The N-terminal stretch at methionine 1 to alanine 18 is a signal peptide. Residue histidine 55 coordinates Cu cation. An intrachain disulfide couples cysteine 66 to cysteine 104. The N-linked (GlcNAc...) asparagine glycan is linked to asparagine 87. 2 residues coordinate Cu cation: cysteine 98 and histidine 103. Residues glycine 130 to serine 160 are disordered. Asparagine 142 carries an N-linked (GlcNAc...) asparagine glycan. The segment covering glycine 143–serine 160 has biased composition (low complexity). Glycine 153 carries GPI-anchor amidated glycine lipidation. The propeptide at glycine 154–leucine 186 is removed in mature form.

It belongs to the multicopper oxidase family. It depends on Cu cation as a cofactor.

The protein resides in the cell membrane. The protein localises to the secreted. Its function is as follows. Probable electron transfer copper protein that serves as a direct electron donor. In Arthroderma benhamiae (strain ATCC MYA-4681 / CBS 112371) (Trichophyton mentagrophytes), this protein is Probable GPI-anchored cupredoxin ARB_05732-1.